Here is a 1382-residue protein sequence, read N- to C-terminus: Hepatocyte growth factor receptor (1382 aa).

Positions 1–24 (MKAPAVLAPGVLVLLFTLVRKSHG) are cleaved as a signal peptide. Topologically, residues 25–935 (ECEEALAKSK…VQPDQNFTGL (911 aa)) are extracellular. Residues 27–516 (EEALAKSKMN…TGKKITKIPL (490 aa)) enclose the Sema domain. Asparagine 45 carries N-linked (GlcNAc...) asparagine glycosylation. Intrachain disulfides connect cysteine 95–cysteine 101, cysteine 98–cysteine 160, cysteine 133–cysteine 141, and cysteine 173–cysteine 176. Asparagine 106 carries an N-linked (GlcNAc...) asparagine glycan. N-linked (GlcNAc...) asparagine glycosylation is found at asparagine 203 and asparagine 359. 2 disulfides stabilise this stretch: cysteine 299/cysteine 364 and cysteine 386/cysteine 398. 3 N-linked (GlcNAc...) asparagine glycosylation sites follow: asparagine 400, asparagine 406, and asparagine 450. Disulfide bonds link cysteine 521–cysteine 539, cysteine 527–cysteine 562, cysteine 530–cysteine 546, and cysteine 542–cysteine 552. IPT/TIG domains are found at residues 564 to 656 (PTIY…FSYV), 658 to 740 (PVIT…FSYQ), and 743 to 837 (PTVY…LIYV). An O-linked (Man) threonine glycan is attached at threonine 583. N-linked (GlcNAc...) asparagine glycosylation is found at asparagine 608 and asparagine 636. O-linked (Man) threonine glycosylation occurs at threonine 677. An N-linked (GlcNAc...) asparagine glycan is attached at asparagine 751. Threonine 762 carries O-linked (Man) threonine glycosylation. 3 N-linked (GlcNAc...) asparagine glycosylation sites follow: asparagine 786, asparagine 880, and asparagine 931. Residues 936–956 (IVGVVSISIILLLLLGLFLWL) form a helical membrane-spanning segment. At 957-1382 (KKRKQIKDLG…QDSVDDEVDT (426 aa)) the chain is on the cytoplasmic side. Residue serine 967 is modified to Phosphoserine. Phosphothreonine is present on threonine 978. Serine 991, serine 998, and serine 1001 each carry phosphoserine. Tyrosine 1004 is modified (phosphotyrosine). The 268-residue stretch at 1079–1346 (VHFNEVIGRG…RISAIFSTFI (268 aa)) folds into the Protein kinase domain. ATP-binding positions include 1085-1093 (IGRGHFGCV) and lysine 1111. The Proton acceptor role is filled by aspartate 1205. The tract at residues 1213 to 1382 (LDEKFTVKVA…QDSVDDEVDT (170 aa)) is interaction with RANBP9. Phosphotyrosine is present on tyrosine 1231. Residues tyrosine 1235 and tyrosine 1236 each carry the phosphotyrosine; by autocatalysis modification. Threonine 1290 is subject to Phosphothreonine. The interval 1321–1360 (WHPKAEMRPSFSELVSRISAIFSTFIGEHYVHVNTTYVNV) is interaction with MUC20. Tyrosine 1350 and tyrosine 1357 each carry phosphotyrosine; by autocatalysis. A Phosphotyrosine modification is found at tyrosine 1366.

The protein belongs to the protein kinase superfamily. Tyr protein kinase family. As to quaternary structure, heterodimer made of an alpha chain (50 kDa) and a beta chain (145 kDa) which are disulfide linked. Binds PLXNB1. Interacts when phosphorylated with downstream effectors including STAT3, PIK3R1, SRC, PCLG1, GRB2 and GAB1. Interacts with SPSB1, SPSB2 and SPSB4. Interacts with INPP5D/SHIP1. When phosphorylated at Tyr-1357, interacts with INPPL1/SHIP2. Interacts with RANBP9 and RANBP10, as well as SPSB1, SPSB2, SPSB3 and SPSB4. SPSB1 binding occurs in the presence and in the absence of HGF, however HGF treatment has a positive effect on this interaction. Interacts with MUC20; prevents interaction with GRB2 and suppresses hepatocyte growth factor-induced cell proliferation. Interacts with GRB10. Interacts with PTPN1 and PTPN2. Interacts with HSP90AA1 and HSP90AB1; the interaction suppresses MET kinase activity. Interacts with tensin TNS3. Interacts (when phosphorylated) with tensin TNS4 (via SH2 domain); the interaction increases MET protein stability by inhibiting MET endocytosis and subsequent lysosomal degradation. In terms of processing, autophosphorylated in response to ligand binding on Tyr-1235 and Tyr-1236 in the kinase domain leading to further phosphorylation of Tyr-1350 and Tyr-1357 in the C-terminal multifunctional docking site. Dephosphorylated by PTPRJ at Tyr-1350 and Tyr-1366. Dephosphorylated by PTPN1 and PTPN2. Post-translationally, ubiquitinated. Ubiquitination by CBL regulates the receptor stability and activity through proteasomal degradation. O-mannosylation of IPT/TIG domains by TMEM260 is required for protein maturation. O-mannosylated residues are composed of single mannose glycans that are not elongated or modified.

The protein resides in the membrane. It carries out the reaction L-tyrosyl-[protein] + ATP = O-phospho-L-tyrosyl-[protein] + ADP + H(+). With respect to regulation, in its inactive state, the C-terminal tail interacts with the catalytic domain and inhibits the kinase activity. Upon ligand binding, the C-terminal tail is displaced and becomes phosphorylated, thus increasing the kinase activity. In terms of biological role, receptor tyrosine kinase that transduces signals from the extracellular matrix into the cytoplasm by binding to hepatocyte growth factor/HGF ligand. Regulates many physiological processes including proliferation, scattering, morphogenesis and survival. Ligand binding at the cell surface induces autophosphorylation of MET on its intracellular domain that provides docking sites for downstream signaling molecules. Following activation by ligand, interacts with the PI3-kinase subunit PIK3R1, PLCG1, SRC, GRB2, STAT3 or the adapter GAB1. Recruitment of these downstream effectors by MET leads to the activation of several signaling cascades including the RAS-ERK, PI3 kinase-AKT, or PLCgamma-PKC. The RAS-ERK activation is associated with the morphogenetic effects while PI3K/AKT coordinates prosurvival effects. During embryonic development, MET signaling plays a role in gastrulation, development and migration of muscles and neuronal precursors, angiogenesis and kidney formation. In adults, participates in wound healing as well as organ regeneration and tissue remodeling. Also promotes differentiation and proliferation of hematopoietic cells. The protein is Hepatocyte growth factor receptor (MET) of Loxodonta africana (African elephant).